We begin with the raw amino-acid sequence, 106 residues long: MADFLGMMKQAAQLQSKMKAMQAELDQIEVEGLSGGGLVKIRMSAKMEVRGVSIDPSLLKADEGEVLEDLLVAALADAHRKAEAAMQEKMQALTGGLGLPPGLGLG.

This sequence belongs to the YbaB/EbfC family. As to quaternary structure, homodimer.

The protein resides in the cytoplasm. Its subcellular location is the nucleoid. Binds to DNA and alters its conformation. May be involved in regulation of gene expression, nucleoid organization and DNA protection. The chain is Nucleoid-associated protein RPB_0667 from Rhodopseudomonas palustris (strain HaA2).